Here is a 226-residue protein sequence, read N- to C-terminus: ATP synthase F(0) complex subunit a (226 aa).

Transmembrane regions (helical) follow at residues 12–32 (PTMM…ILFP), 68–88 (WALM…LGLL), 97–117 (QLSM…ITGF), 138–158 (IPML…ALAV), 164–184 (ITAG…LMDI), and 189–209 (AFIT…VALI).

The protein belongs to the ATPase A chain family. In terms of assembly, component of the ATP synthase complex composed at least of ATP5F1A/subunit alpha, ATP5F1B/subunit beta, ATP5MC1/subunit c (homooctomer), MT-ATP6/subunit a, MT-ATP8/subunit 8, ATP5ME/subunit e, ATP5MF/subunit f, ATP5MG/subunit g, ATP5MK/subunit k, ATP5MJ/subunit j, ATP5F1C/subunit gamma, ATP5F1D/subunit delta, ATP5F1E/subunit epsilon, ATP5PF/subunit F6, ATP5PB/subunit b, ATP5PD/subunit d, ATP5PO/subunit OSCP. ATP synthase complex consists of a soluble F(1) head domain (subunits alpha(3) and beta(3)) - the catalytic core - and a membrane F(0) domain - the membrane proton channel (subunits c, a, 8, e, f, g, k and j). These two domains are linked by a central stalk (subunits gamma, delta, and epsilon) rotating inside the F1 region and a stationary peripheral stalk (subunits F6, b, d, and OSCP). Interacts with DNAJC30; interaction is direct.

Its subcellular location is the mitochondrion inner membrane. The catalysed reaction is H(+)(in) = H(+)(out). Functionally, subunit a, of the mitochondrial membrane ATP synthase complex (F(1)F(0) ATP synthase or Complex V) that produces ATP from ADP in the presence of a proton gradient across the membrane which is generated by electron transport complexes of the respiratory chain. ATP synthase complex consist of a soluble F(1) head domain - the catalytic core - and a membrane F(1) domain - the membrane proton channel. These two domains are linked by a central stalk rotating inside the F(1) region and a stationary peripheral stalk. During catalysis, ATP synthesis in the catalytic domain of F(1) is coupled via a rotary mechanism of the central stalk subunits to proton translocation. With the subunit c (ATP5MC1), forms the proton-conducting channel in the F(0) domain, that contains two crucial half-channels (inlet and outlet) that facilitate proton movement from the mitochondrial intermembrane space (IMS) into the matrix. Protons are taken up via the inlet half-channel and released through the outlet half-channel, following a Grotthuss mechanism. This is ATP synthase F(0) complex subunit a from Halichoerus grypus (Gray seal).